The following is a 93-amino-acid chain: Small ribosomal subunit protein uS19 (93 aa).

The protein belongs to the universal ribosomal protein uS19 family.

Protein S19 forms a complex with S13 that binds strongly to the 16S ribosomal RNA. The polypeptide is Small ribosomal subunit protein uS19 (Paenarthrobacter aurescens (strain TC1)).